The sequence spans 264 residues: tRNA pseudouridine synthase A (264 aa).

Asp-51 (nucleophile) is an active-site residue. Position 109 (Tyr-109) interacts with substrate.

The protein belongs to the tRNA pseudouridine synthase TruA family. As to quaternary structure, homodimer.

The enzyme catalyses uridine(38/39/40) in tRNA = pseudouridine(38/39/40) in tRNA. In terms of biological role, formation of pseudouridine at positions 38, 39 and 40 in the anticodon stem and loop of transfer RNAs. The polypeptide is tRNA pseudouridine synthase A (Photorhabdus laumondii subsp. laumondii (strain DSM 15139 / CIP 105565 / TT01) (Photorhabdus luminescens subsp. laumondii)).